Consider the following 192-residue polypeptide: Ion-translocating oxidoreductase complex subunit A (192 aa).

6 helical membrane-spanning segments follow: residues 5–25 (LLLL…FLGL), 39–59 (IGMS…SYLV), 65–85 (LPFE…AVVV), 102–122 (ALGI…VALL), 134–154 (AIYG…FSAM), and 171–191 (AIAM…TGLV).

Belongs to the NqrDE/RnfAE family. As to quaternary structure, the complex is composed of six subunits: RnfA, RnfB, RnfC, RnfD, RnfE and RnfG.

It is found in the cell inner membrane. Its function is as follows. Part of a membrane-bound complex that couples electron transfer with translocation of ions across the membrane. In Shewanella sediminis (strain HAW-EB3), this protein is Ion-translocating oxidoreductase complex subunit A.